The following is a 64-amino-acid chain: MPKNKTHSGAKKRFRITGSGKVMREQANKRHLLEVKSSKRTRRLSVDQVVSPADVKKIKKLLGR.

The protein belongs to the bacterial ribosomal protein bL35 family.

In Kineococcus radiotolerans (strain ATCC BAA-149 / DSM 14245 / SRS30216), this protein is Large ribosomal subunit protein bL35.